The sequence spans 69 residues: Alpha-conotoxin SrIA/SrIB (69 aa).

The signal sequence occupies residues 1–21; the sequence is MGMRMMFTVFLLVVLATTVVS. A propeptide spanning residues 22 to 48 is cleaved from the precursor; that stretch reads FTSDSAFDSRNVAANDKVSDMIALTAR. 2 disulfides stabilise this stretch: Cys-51–Cys-57 and Cys-52–Cys-65. The tract at residues 53–55 is ser-Xaa-Pro motif, crucial for potent interaction with nAChR; it reads SRP. The residue at position 55 (Pro-55) is a 4-hydroxyproline; in form Sr1A and Sr1B. Position 60 is a 4-carboxyglutamate; in form Sr1A (Glu-60). A 4-carboxyglutamate; in form Sr1A and Sr1B modification is found at Glu-63. Gly-66 carries the glycine amide; in form Sr1A and Sr1B modification.

This sequence belongs to the conotoxin A superfamily. Occurs in 2 forms which differ in the post-translational modification of Glu-60. In form SrA1 Glu-60 is 4-carboxyglutamate while in form SrA2 Glu-60 is unmodified. Expressed by the venom duct.

It is found in the secreted. Alpha-conotoxins act on postsynaptic membranes, they bind to the nicotinic acetylcholine receptors (nAChR) and thus inhibit them. Has weak blocking effects on muscle nAChR composed of alpha-1/beta-1/gamma/delta subunits and the central nervous system nAChR composed of alpha-4/beta-2 subunits. Does not detectably affect the peripheral nervous system nAChR composed of alpha-3/beta-4 subunits. Low toxin concentrations potentiate currents in muscle nAChR composed of alpha-1/beta-1/gamma/delta subunits and central nervous system nAChR composed of alpha-4/beta-2 subunits, but not the peripheral nervous system nAChR composed of alpha-3/beta-4 subunits. The sequence is that of Alpha-conotoxin SrIA/SrIB from Conus spurius (Alphabet cone).